Here is a 207-residue protein sequence, read N- to C-terminus: Ras-related protein rab7 (207 aa).

GTP-binding positions include 15–22 (GDSGVGKT), 34–40 (SNQYKAT), 63–67 (DTAGQ), 125–128 (NKID), and 156–157 (AK). The short motif at 37-45 (YKATIGADF) is the Effector region element. Residues cysteine 205 and cysteine 207 are each lipidated (S-geranylgeranyl cysteine). Cysteine 207 is modified (cysteine methyl ester).

Belongs to the small GTPase superfamily. Rab family. (Microbial infection) Interacts with Singapore grouper iridoviral proteins VP69 (ORF69) and VP101 (ORF101). Ubiquitously expressed. Expressed in liver, spleen, kidney, brain, intestine, heart, skin, muscle, gill and stomach.

Its subcellular location is the late endosome membrane. It is found in the lysosome membrane. In terms of biological role, key regulator in endo-lysosomal trafficking. Governs early-to-late endosomal maturation, microtubule minus-end as well as plus-end directed endosomal migration and positioning, and endosome-lysosome transport through different protein-protein interaction cascades. Plays important roles in microbial pathogen infection and survival, as well as in participating in the life cycle of viruses. The chain is Ras-related protein rab7 from Epinephelus coioides (Orange-spotted grouper).